The chain runs to 300 residues: MRCLALDIGGTKIAAAIVKNGEIEQRQQIHTPRENVVEGMHQALGKLLADYEGQFDYVAVASTGIINNGILSALNPKNLGGLAEFPLKASIAKHTDKPIGLLNDAQAATYAEYQLQNSEQVSNFVFITVSTGVGGGIVLNQILQTGSRGIAGHIGHTLADPNGAICGCGRRGCVEAIASGRAIEAVSSQWEDPCDPKEVFERFRKNDEKATALVERSAKAIANLIADLVISLDIQKIAIGGSVGLAEGYLSLVEKYLQDFPSIYCCEIETAKFGQDAGLIGAAYWVKDVLLDKPEGTIYG.

ATP-binding positions include 5-12 (ALDIGGTK) and 132-139 (GVGGGIVL). Zn(2+) contacts are provided by His-156, Cys-166, Cys-168, and Cys-173.

It belongs to the ROK (NagC/XylR) family. NanK subfamily. In terms of assembly, homodimer.

It catalyses the reaction an N-acyl-D-mannosamine + ATP = an N-acyl-D-mannosamine 6-phosphate + ADP + H(+). The protein operates within amino-sugar metabolism; N-acetylneuraminate degradation; D-fructose 6-phosphate from N-acetylneuraminate: step 2/5. Functionally, catalyzes the phosphorylation of N-acetylmannosamine (ManNAc) to ManNAc-6-P. The chain is N-acetylmannosamine kinase from Haemophilus influenzae (strain PittEE).